The following is a 101-amino-acid chain: Small ribosomal subunit protein uS14 (101 aa).

Belongs to the universal ribosomal protein uS14 family. In terms of assembly, part of the 30S ribosomal subunit. Contacts proteins S3 and S10.

Its function is as follows. Binds 16S rRNA, required for the assembly of 30S particles and may also be responsible for determining the conformation of the 16S rRNA at the A site. This chain is Small ribosomal subunit protein uS14, found in Aeromonas hydrophila subsp. hydrophila (strain ATCC 7966 / DSM 30187 / BCRC 13018 / CCUG 14551 / JCM 1027 / KCTC 2358 / NCIMB 9240 / NCTC 8049).